The primary structure comprises 62 residues: Large ribosomal subunit protein bL28 (62 aa).

It belongs to the bacterial ribosomal protein bL28 family.

This Koribacter versatilis (strain Ellin345) protein is Large ribosomal subunit protein bL28.